The chain runs to 233 residues: KREAEANRTPEQQIYDPYKYVETVFVVDKAMVTKYNGDLDKIKTRMYEAANNMNEMYRYMFFRVVMVGLIIWTEEDKITVKPDVDYTLNAFAEWRKTYLLAEKKHDNAQLITGIDFRGSIIGYAYIGSMCHPKRSVGIIQDYSPINLVLAVIMAHEMGHNLGIHHDDGYCYCGGYPCIMGPSISPEPSKFFSNCSYIQCWDFIMNHNPECIDNEPLGTDIISPPLCGNELLEA.

In terms of domain architecture, Peptidase M12B spans 19–215 (KYVETVFVVD…HNPECIDNEP (197 aa)). The Ca(2+) site is built by glutamate 22 and aspartate 106. 3 disulfides stabilise this stretch: cysteine 130–cysteine 210, cysteine 170–cysteine 194, and cysteine 172–cysteine 177. Histidine 155 provides a ligand contact to Zn(2+). Glutamate 156 is an active-site residue. Histidine 159 and histidine 165 together coordinate Zn(2+). A glycan (N-linked (GlcNAc...) asparagine) is linked at asparagine 193. Cysteine 210, asparagine 213, asparagine 228, leucine 230, and glutamate 232 together coordinate Ca(2+).

It belongs to the venom metalloproteinase (M12B) family. P-III subfamily. Requires Zn(2+) as cofactor. Expressed by the venom gland.

It is found in the secreted. Inhibited by PMSF and EDTA. Slightly inhibited by Cu(2+) and Zn(2+). Not inhibited by aprotinin, SBTI, Ca(2+), Mg(2+), Na(+) and K(+). Its function is as follows. Snake venom zinc metalloprotease that acts at several levels. It has direct fibrino(geno)lytic activity (Aalpha chain of fibrinogen is cleaved quickly, Bbeta chain slowly, and gamma chain even more slowly) and degradation of TNF-alpha. These activities permit to protect against sepsis and disseminated intravascular coagulation. It inhibits ADP-induced platelet aggregation in human platelet-rich plasma (IC(50)=65.4 ug/ml). It decreases the activity of complement by degrading human C5, C6 and C9 in vitro, decreasing serum levels of C1q, C3 and C4 in rat, and inhibiting the MAC deposition on HUVECs membrane. This inhibition of complement protects against hyperacute rejection that is the main barrier in xenotransplantation. Has preference for Lys at the P1 position. Cleaves insulin B chain at '36-Val-|-Glu-37', '39-Leu-|-Tyr-40', and '48-Phe-|-Phe-49' bonds. Also cleaves fibronectin and type IV collagen. This is Zinc metalloproteinase recombinant fibrinogenase II from Deinagkistrodon acutus (Hundred-pace snake).